A 104-amino-acid chain; its full sequence is DNA-directed RNA polymerase subunit omega (104 aa).

Belongs to the RNA polymerase subunit omega family. The RNAP catalytic core consists of 2 alpha, 1 beta, 1 beta' and 1 omega subunit. When a sigma factor is associated with the core the holoenzyme is formed, which can initiate transcription.

The catalysed reaction is RNA(n) + a ribonucleoside 5'-triphosphate = RNA(n+1) + diphosphate. Functionally, promotes RNA polymerase assembly. Latches the N- and C-terminal regions of the beta' subunit thereby facilitating its interaction with the beta and alpha subunits. This chain is DNA-directed RNA polymerase subunit omega, found in Streptococcus thermophilus (strain CNRZ 1066).